A 152-amino-acid chain; its full sequence is Transcriptional regulator MraZ (152 aa).

2 consecutive SpoVT-AbrB domains span residues 5–52 (ATLV…PLPE) and 81–124 (ASEC…DETT).

It belongs to the MraZ family. In terms of assembly, forms oligomers.

Its subcellular location is the cytoplasm. It localises to the nucleoid. Negatively regulates its own expression and that of the subsequent genes in the proximal part of the division and cell wall (dcw) gene cluster. Acts by binding directly to DNA. May also regulate the expression of genes outside the dcw cluster. The protein is Transcriptional regulator MraZ of Shigella flexneri serotype 5b (strain 8401).